Here is a 383-residue protein sequence, read N- to C-terminus: S-adenosylmethionine synthase (383 aa).

H15 lines the ATP pocket. D17 is a binding site for Mg(2+). E43 lines the K(+) pocket. Residues E56 and Q99 each contribute to the L-methionine site. The interval 99 to 109 (QSQDINQGVDR) is flexible loop. ATP-binding positions include 164–166 (DAK), 230–231 (RF), D239, 245–246 (RK), A262, and K266. D239 contributes to the L-methionine binding site. K270 serves as a coordination point for L-methionine.

The protein belongs to the AdoMet synthase family. In terms of assembly, homotetramer; dimer of dimers. Requires Mg(2+) as cofactor. K(+) serves as cofactor.

Its subcellular location is the cytoplasm. It carries out the reaction L-methionine + ATP + H2O = S-adenosyl-L-methionine + phosphate + diphosphate. Its pathway is amino-acid biosynthesis; S-adenosyl-L-methionine biosynthesis; S-adenosyl-L-methionine from L-methionine: step 1/1. Catalyzes the formation of S-adenosylmethionine (AdoMet) from methionine and ATP. The overall synthetic reaction is composed of two sequential steps, AdoMet formation and the subsequent tripolyphosphate hydrolysis which occurs prior to release of AdoMet from the enzyme. In Actinobacillus succinogenes (strain ATCC 55618 / DSM 22257 / CCUG 43843 / 130Z), this protein is S-adenosylmethionine synthase.